Consider the following 310-residue polypeptide: S-adenosylmethionine-dependent nucleotide dehydratase (310 aa).

Positions 3-221 (PAIPPTINLH…VERHRKVESS (219 aa)) constitute a Radical SAM core domain. C17, C21, and C24 together coordinate [4Fe-4S] cluster.

This sequence belongs to the radical SAM superfamily. Viperin family. [4Fe-4S] cluster serves as cofactor.

The enzyme catalyses GTP + AH2 + S-adenosyl-L-methionine = 3'-deoxy-3',4'-didehydro-GTP + 5'-deoxyadenosine + L-methionine + A + H2O + H(+). Functionally, expression of pVip15 in E.coli (strain MG1655) confers resistance to phage T7; prevents culture collapse upon infection. Catalyzes the conversion of guanosine triphosphate (GTP) to 3'-deoxy-3',4'-didehydro-GTP (ddhGTP), probably via a SAM-dependent radical mechanism. The modified nucleotide represses transcription from T7 RNA polymerase-directed genes (possibly by acting as chain terminators), strongly suggesting these nucleotides block viral polymerase transcription. The sequence is that of S-adenosylmethionine-dependent nucleotide dehydratase from Coraliomargarita akajimensis (strain DSM 45221 / IAM 15411 / JCM 23193 / KCTC 12865 / 04OKA010-24).